Reading from the N-terminus, the 626-residue chain is Forkhead box protein O1 (626 aa).

The segment covering 1 to 11 (MAEAPLPPPPG) has biased composition (pro residues). Disordered stretches follow at residues 1–57 (MAEA…PAAG), 90–142 (DIRQ…SRRN), 218–319 (SSWW…MPEQ), and 484–519 (PTYG…MTHN). Low complexity-rich tracts occupy residues 37–48 (NPSSSANSSPAP) and 101–133 (QHPQ…AQQP). The fork-head DNA-binding region spans 144–238 (WGNLSYADLI…KNGKSPRRRA (95 aa)). A compositionally biased stretch (basic residues) spans 248–259 (AKSRGRAAKKKA). Positions 262 to 277 (QSSQDGSSDSPGSQFS) are enriched in low complexity. Composition is skewed to polar residues over residues 298–310 (RPRT…TISG) and 484–494 (PTYGSQPTHNK).

Post-translationally, phosphorylated by AKT1; insulin-induced. IGF1 rapidly induces phosphorylation of Thr-28, Ser-240 and Ser-303. Phosphorylation of Ser-240 decreases DNA-binding activity and promotes the phosphorylation of Thr-28, and Ser-303, which leads to nuclear exclusion and loss of function. Phosphorylation of Ser-313 is independent of IGF1 and leads to reduced function.

The protein localises to the cytoplasm. The protein resides in the nucleus. Its function is as follows. Transcription factor that regulates metabolic homeostasis in response to oxidative stress. Binds to the consensus sequence 5'-TT[G/A]TTTTG-3' and the related Daf-16 family binding element (DBE) with consensus sequence 5'-TT[G/A]TTTAC-3'. Main regulator of redox balance and osteoblast numbers and controls bone mass. Orchestrates the endocrine function of the skeleton in regulating glucose metabolism. Also acts as a key regulator of chondrogenic commitment of skeletal progenitor cells in response to lipid availability: when lipids levels are low, translocates to the nucleus and promotes expression of sox9, which induces chondrogenic commitment and suppresses fatty acid oxidation. Acts synergistically with atf4 to suppress osteocalcin/bglap activity, increasing glucose levels and triggering glucose intolerance and insulin insensitivity. Also suppresses the transcriptional activity of runx2, an upstream activator of osteocalcin/bglap. May act as a positive regulator of apoptosis in cardiac smooth muscle cells as a result of its transcriptional activation of pro-apoptotic genes. In Xenopus tropicalis (Western clawed frog), this protein is Forkhead box protein O1.